The chain runs to 701 residues: Translation factor GUF1, mitochondrial (701 aa).

The transit peptide at 1–29 (MSCCKGLTPQCVRVRLPRRPALSHPARLY) directs the protein to the mitochondrion. The segment covering 23–50 (SHPARLYSSSSSSNSHSSPSRPRLLSRP) has biased composition (low complexity). Residues 23–85 (SHPARLYSSS…RSSHHSSAPM (63 aa)) form a disordered region. The tr-type G domain occupies 98 to 283 (ERYRNFCVIA…AVIEQIPHPT (186 aa)). GTP is bound by residues 107-114 (AHVDHGKS), 172-176 (DTPGH), and 226-229 (NKID).

It belongs to the TRAFAC class translation factor GTPase superfamily. Classic translation factor GTPase family. LepA subfamily.

It localises to the mitochondrion inner membrane. The catalysed reaction is GTP + H2O = GDP + phosphate + H(+). Its function is as follows. Promotes mitochondrial protein synthesis. May act as a fidelity factor of the translation reaction, by catalyzing a one-codon backward translocation of tRNAs on improperly translocated ribosomes. Binds to mitochondrial ribosomes in a GTP-dependent manner. This is Translation factor GUF1, mitochondrial from Pyricularia oryzae (strain 70-15 / ATCC MYA-4617 / FGSC 8958) (Rice blast fungus).